The chain runs to 353 residues: MSCQESSPGPPGDITPFQQMMASCSGAIITSLLVTPLDVVKIRLQAQKNPFPKGKCFVYCNGLMDHICVCENGNTKVWYKAPGHFSGTLDAFLKIIRMEGIRSLWSGLPPTLIMAVPATVIYFTCYDQLFALLKLKMGDRSDLAPLFAGAIARVGSATVISPLELIRTKMQSEKQSYREMSAVIRSALKNEGLRSLWRGWGPTLLRDVPFSAMYWFNYEKGKWWLCKRYSCSEPTVAITFTAGALSGSIASIITLPFDVVKTKRQVEMGELQTMKLSTQVSSSTCSVMKRIVAENGVSGLFAGFMPRLIKVAPACAIMISTYEFGKAFFRKYNHQKEGQATASQHIISHTEKH.

3 Solcar repeats span residues 14-132 (ITPF…LFAL), 140-224 (RSDL…GKWW), and 234-328 (PTVA…GKAF). 6 helical membrane-spanning segments follow: residues 20–40 (MMASCSGAIITSLLVTPLDVV), 104–124 (LWSGLPPTLIMAVPATVIYFT), 143–163 (LAPLFAGAIARVGSATVISPL), 200–221 (WGPTLLRDVPFSAMYWFNYEKG), 237–257 (AITFTAGALSGSIASIITLPF), and 299–319 (GLFAGFMPRLIKVAPACAIMI).

Belongs to the mitochondrial carrier (TC 2.A.29) family.

The protein resides in the mitochondrion inner membrane. The enzyme catalyses glutathione(in) = glutathione(out). Functionally, probable mitochondrial transporter required for glutathione import into mitochondria. Glutathione, which plays key roles in oxidative metabolism, is produced exclusively in the cytosol and is imported in many organelles. Mitochondrial glutathione is required for the activity and stability of proteins containing iron-sulfur clusters. This chain is Mitochondrial glutathione transporter SLC25A40, found in Danio rerio (Zebrafish).